A 662-amino-acid chain; its full sequence is High affinity sulfate transporter 2 (662 aa).

The interval 1 to 35 (MSQRVSDQAMAEVIAETRTNSSSRRHGGGDDTPSL) is disordered. 12 helical membrane passes run 103-123 (GDFIAGLTIASLCIPQDLAYA), 128-148 (LDPWYGLYSSFVAPLVYAFMG), 153-173 (IAIGPVAVVSLLLGTLLSNEI), 182-202 (LRLAFTATFFAGVTQMLLGVC), 205-225 (GFLIDFLSHAAIVGFMAGAAI), 264-284 (WETILIGLSFLIFLLITKYIA), 291-311 (FWVSAISPMICVIVSTFFVYI), 346-366 (AGVRVGVVAGLVALTEAMAIG), 383-403 (MVAMGTMNIVGSLTSCYVTTG), 420-440 (VSNIVMAIVVLLTLLVITPLF), 447-467 (VLASIIIAAVVNLVNIEAMVL), and 481-501 (GAFFGVIFKSVEIGLLIAVAI). Residues 532–655 (QYPKAEQIPG…LTVADAVATY (124 aa)) enclose the STAS domain.

It belongs to the SLC26A/SulP transporter (TC 2.A.53) family.

Its subcellular location is the membrane. In terms of biological role, high-affinity H(+)/sulfate cotransporter that mediates the uptake of sulfate by plant roots from low concentrations of sulfate in the soil solution. This is High affinity sulfate transporter 2 (ST2) from Stylosanthes hamata (Caribbean stylo).